Consider the following 270-residue polypeptide: Acyl-[acyl-carrier-protein]--UDP-N-acetylglucosamine O-acyltransferase (270 aa).

The protein belongs to the transferase hexapeptide repeat family. LpxA subfamily. In terms of assembly, homotrimer.

It localises to the cytoplasm. The catalysed reaction is a (3R)-hydroxyacyl-[ACP] + UDP-N-acetyl-alpha-D-glucosamine = a UDP-3-O-[(3R)-3-hydroxyacyl]-N-acetyl-alpha-D-glucosamine + holo-[ACP]. It functions in the pathway glycolipid biosynthesis; lipid IV(A) biosynthesis; lipid IV(A) from (3R)-3-hydroxytetradecanoyl-[acyl-carrier-protein] and UDP-N-acetyl-alpha-D-glucosamine: step 1/6. In terms of biological role, involved in the biosynthesis of lipid A, a phosphorylated glycolipid that anchors the lipopolysaccharide to the outer membrane of the cell. The protein is Acyl-[acyl-carrier-protein]--UDP-N-acetylglucosamine O-acyltransferase of Helicobacter acinonychis (strain Sheeba).